The following is a 357-amino-acid chain: Membrane-bound lytic murein transglycosylase C (357 aa).

Positions 1 to 16 are cleaved as a signal peptide; that stretch reads MKKILPLVIIAPLLIS. Cys17 carries the N-palmitoyl cysteine lipid modification. Residue Cys17 is the site of S-diacylglycerol cysteine attachment.

This sequence belongs to the transglycosylase Slt family.

Its subcellular location is the cell outer membrane. The enzyme catalyses Exolytic cleavage of the (1-&gt;4)-beta-glycosidic linkage between N-acetylmuramic acid (MurNAc) and N-acetylglucosamine (GlcNAc) residues in peptidoglycan, from either the reducing or the non-reducing ends of the peptidoglycan chains, with concomitant formation of a 1,6-anhydrobond in the MurNAc residue.. In terms of biological role, murein-degrading enzyme. May play a role in recycling of muropeptides during cell elongation and/or cell division. The protein is Membrane-bound lytic murein transglycosylase C of Sodalis glossinidius (strain morsitans).